Consider the following 363-residue polypeptide: Ribonuclease P protein subunit p40 (363 aa).

In terms of assembly, component of nuclear RNase P and RNase MRP ribonucleoproteins. RNase P consists of a catalytic RNA moiety and about 10 protein subunits; POP1, POP4, POP5, POP7, RPP14, RPP21, RPP25, RPP30, RPP38 and RPP40. Within the RNase P complex, POP1, POP7 and RPP25 form the 'finger' subcomplex, POP5, RPP14, RPP40 and homodimeric RPP30 form the 'palm' subcomplex, and RPP21, POP4 and RPP38 form the 'wrist' subcomplex. All subunits of the RNase P complex interact with the catalytic RNA. Several subunits of RNase P are also part of the RNase MRP complex. RNase MRP consists of a catalytic RNA moiety and about 8 protein subunits; POP1, POP7, RPP25, RPP30, RPP38, RPP40 and possibly also POP4 and POP5.

Its subcellular location is the nucleus. It localises to the nucleolus. Functionally, component of ribonuclease P, a ribonucleoprotein complex that generates mature tRNA molecules by cleaving their 5'-ends. Also a component of the MRP ribonuclease complex, which cleaves pre-rRNA sequences. The protein is Ribonuclease P protein subunit p40 (RPP40) of Homo sapiens (Human).